The following is a 360-amino-acid chain: Mannonate dehydratase (360 aa).

It belongs to the mannonate dehydratase family. It depends on Fe(2+) as a cofactor. Requires Mn(2+) as cofactor.

The enzyme catalyses D-mannonate = 2-dehydro-3-deoxy-D-gluconate + H2O. The protein operates within carbohydrate metabolism; pentose and glucuronate interconversion. Functionally, catalyzes the dehydration of D-mannonate. The protein is Mannonate dehydratase (uxuA) of Thermotoga maritima (strain ATCC 43589 / DSM 3109 / JCM 10099 / NBRC 100826 / MSB8).